The primary structure comprises 135 residues: 2-iminobutanoate/2-iminopropanoate deaminase (135 aa).

Residue Ser-2 is modified to N-acetylserine. N6-succinyllysine occurs at positions 13, 60, 67, and 134.

This sequence belongs to the RutC family. In terms of assembly, homotrimer. Interacts with YTHDF2. As to expression, expressed predominantly in liver and kidney. Lower levels in lung and brain.

Its subcellular location is the cytoplasm. It localises to the nucleus. The protein resides in the peroxisome. It is found in the mitochondrion. The enzyme catalyses 2-iminobutanoate + H2O = 2-oxobutanoate + NH4(+). It catalyses the reaction 2-iminopropanoate + H2O = pyruvate + NH4(+). Catalyzes the hydrolytic deamination of enamine/imine intermediates that form during the course of normal metabolism. May facilitate the release of ammonia from these potentially toxic reactive metabolites, reducing their impact on cellular components. It may act on enamine/imine intermediates formed by several types of pyridoxal-5'-phosphate-dependent dehydratases including L-threonine dehydratase. In terms of biological role, also promotes endoribonucleolytic cleavage of some transcripts by promoting recruitment of the ribonuclease P/MRP complex. Acts by bridging YTHDF2 and the ribonuclease P/MRP complex. RIDA/HRSP12 binds to N6-methyladenosine (m6A)-containing mRNAs containing a 5'-GGUUC-3' motif: cooperative binding of RIDA/HRSP12 and YTHDF2 to such transcripts lead to recruitment of the ribonuclease P/MRP complex and subsequent endoribonucleolytic cleavage. This chain is 2-iminobutanoate/2-iminopropanoate deaminase, found in Mus musculus (Mouse).